Reading from the N-terminus, the 93-residue chain is Small ribosomal subunit protein uS19 (93 aa).

Belongs to the universal ribosomal protein uS19 family.

Functionally, protein S19 forms a complex with S13 that binds strongly to the 16S ribosomal RNA. This chain is Small ribosomal subunit protein uS19, found in Clostridioides difficile (strain 630) (Peptoclostridium difficile).